Here is a 354-residue protein sequence, read N- to C-terminus: 4-hydroxy-2-oxovalerate aldolase 5 (354 aa).

Residues 11–263 (VTVHDMCLRD…ETGCDLFKLM (253 aa)) form the Pyruvate carboxyltransferase domain. Residue 19–20 (RD) participates in substrate binding. D20 is a binding site for Mn(2+). The Proton acceptor role is filled by H23. Residues S173 and H202 each contribute to the substrate site. Mn(2+)-binding residues include H202 and H204. Residue Y293 coordinates substrate.

It belongs to the 4-hydroxy-2-oxovalerate aldolase family.

It catalyses the reaction (S)-4-hydroxy-2-oxopentanoate = acetaldehyde + pyruvate. This chain is 4-hydroxy-2-oxovalerate aldolase 5, found in Dechloromonas aromatica (strain RCB).